Consider the following 101-residue polypeptide: MAKTQIKVFGFDHKVVDEAAKKLVSLAVATKNKFVGPIPMPTKREEVTILRSVHVNKKSREQFESRTHQRLVVLENPSSELLDKLKRLELPAGVGLKFKEK.

This sequence belongs to the universal ribosomal protein uS10 family. Part of the 30S ribosomal subunit.

In terms of biological role, involved in the binding of tRNA to the ribosomes. The sequence is that of Small ribosomal subunit protein uS10 from Mycoplasmopsis synoviae (strain 53) (Mycoplasma synoviae).